The chain runs to 277 residues: Putative phosphoenolpyruvate synthase regulatory protein (277 aa).

157 to 164 (GVSRCGKT) contributes to the ADP binding site.

It belongs to the pyruvate, phosphate/water dikinase regulatory protein family. PSRP subfamily.

It carries out the reaction [pyruvate, water dikinase] + ADP = [pyruvate, water dikinase]-phosphate + AMP + H(+). The catalysed reaction is [pyruvate, water dikinase]-phosphate + phosphate + H(+) = [pyruvate, water dikinase] + diphosphate. Bifunctional serine/threonine kinase and phosphorylase involved in the regulation of the phosphoenolpyruvate synthase (PEPS) by catalyzing its phosphorylation/dephosphorylation. In Erwinia tasmaniensis (strain DSM 17950 / CFBP 7177 / CIP 109463 / NCPPB 4357 / Et1/99), this protein is Putative phosphoenolpyruvate synthase regulatory protein.